Consider the following 583-residue polypeptide: Pyruvate kinase isozyme A, chloroplastic (583 aa).

Residues 1–74 (MSQSLHFSPN…NSGVLYNNNN (74 aa)) constitute a chloroplast transit peptide. Residues 43-52 (KASTSPSSSS) are compositionally biased toward low complexity. A disordered region spans residues 43 to 75 (KASTSPSSSSDPQVLVADNGTGNSGVLYNNNNK). Over residues 62-75 (GTGNSGVLYNNNNK) the composition is skewed to polar residues. Residue Arg-134 coordinates substrate. K(+)-binding residues include Asn-136, Asp-168, and Thr-169. An ATP-binding site is contributed by 136 to 139 (NMCH). Position 333 (Glu-333) interacts with Mg(2+). Residues Gly-356, Asp-357, and Ser-389 each coordinate substrate. A Mg(2+)-binding site is contributed by Asp-357.

The protein belongs to the pyruvate kinase family. Oligomer of alpha and beta subunits. Requires Mg(2+) as cofactor. It depends on K(+) as a cofactor.

The protein resides in the plastid. It is found in the chloroplast. It catalyses the reaction pyruvate + ATP = phosphoenolpyruvate + ADP + H(+). The protein operates within carbohydrate degradation; glycolysis; pyruvate from D-glyceraldehyde 3-phosphate: step 5/5. The polypeptide is Pyruvate kinase isozyme A, chloroplastic (Ricinus communis (Castor bean)).